Here is a 366-residue protein sequence, read N- to C-terminus: Histone-lysine N-methyltransferase SETD7 (366 aa).

3 MORN repeats span residues 36–58 (FEGH…DGST), 59–81 (LEGF…DGGS), and 106–128 (FKGQ…DGGS). Residues 214–336 (ERVYVNDSLI…KDEELTVAYG (123 aa)) enclose the SET domain. S-adenosyl-L-methionine is bound by residues 226–228 (AGE), Asn296, and His297.

It belongs to the class V-like SAM-binding methyltransferase superfamily. Histone-lysine methyltransferase family. SET7 subfamily.

It localises to the nucleus. Its subcellular location is the chromosome. It catalyses the reaction L-lysyl(4)-[histone H3] + S-adenosyl-L-methionine = N(6)-methyl-L-lysyl(4)-[histone H3] + S-adenosyl-L-homocysteine + H(+). It carries out the reaction L-lysyl-[protein] + S-adenosyl-L-methionine = N(6)-methyl-L-lysyl-[protein] + S-adenosyl-L-homocysteine + H(+). Its function is as follows. Histone methyltransferase that specifically monomethylates 'Lys-4' of histone H3. H3 'Lys-4' methylation represents a specific tag for epigenetic transcriptional activation. Plays a central role in the transcriptional activation of genes. Also has methyltransferase activity toward non-histone proteins. The chain is Histone-lysine N-methyltransferase SETD7 (setd7) from Xenopus tropicalis (Western clawed frog).